The chain runs to 215 residues: Nascent polypeptide-associated complex subunit alpha (215 aa).

The segment at 1–81 (MPGEATETVP…SEKKARKAMS (81 aa)) is disordered. Residues 9–28 (VPATEQELPQPQAETGSGTE) show a composition bias toward polar residues. Residues 29–42 (SDSDESVPELEEQD) show a composition bias toward acidic residues. Residue Ser43 is modified to Phosphoserine; by ILK1. Low complexity predominate over residues 44–57 (TQTATQQAQLAAAA). Positions 69-80 (QSRSEKKARKAM) are required for DNA-binding. In terms of domain architecture, NAC-A/B spans 70–135 (SRSEKKARKA…AKIEDLSQQA (66 aa)). An RNA/DNA-binding region spans residues 93-108 (RVTIRKSKNILFVITK). At Ser132 the chain carries Phosphoserine. Position 142 is an N6-acetyllysine; alternate (Lys142). Residue Lys142 forms a Glycyl lysine isopeptide (Lys-Gly) (interchain with G-Cter in SUMO2); alternate linkage. Thr159 carries the post-translational modification Phosphothreonine; by GSK3-beta. A Phosphothreonine modification is found at Thr161. Phosphoserine occurs at positions 166, 186, 191, and 203. Positions 176-213 (VEVKDIELVMSQANVSRAKAVRALKNNSNDIVNAIMEL) constitute a UBA domain.

It belongs to the NAC-alpha family. In terms of assembly, part of the nascent polypeptide-associated complex (NAC), which is a heterodimer of NACA and BTF3 (via NAC-A/B domains). NAC associates with ribosomes through the BTF3/NACB subunit and contacts the ribosomal protein L23, which is positioned near the exiting site. Both subunits can contact nascent polypeptide chains. NACA may also form homodimers, and only this form binds DNA. Interacts with TBP and JUN. Phosphorylation of Ser-43 by ILK during cell adhesion may promote nuclear localization. Phosphorylation of Thr-159 by GSK3B may promote proteasome mediated degradation. In terms of tissue distribution, isoform 1 appears to be ubiquitously expressed.

It is found in the cytoplasm. Its subcellular location is the nucleus. In terms of biological role, prevents inappropriate targeting of non-secretory polypeptides to the endoplasmic reticulum (ER). Binds to nascent polypeptide chains as they emerge from the ribosome and blocks their interaction with the signal recognition particle (SRP), which normally targets nascent secretory peptides to the ER. Also reduces the inherent affinity of ribosomes for protein translocation sites in the ER membrane (M sites). Isoform 1 and isoform 2 appear to bind DNA and play roles in transcription. Isoform 1 may function as a specific coactivator for JUN, acting to stabilize the interaction of JUN homodimers with promoter elements. In Mus musculus (Mouse), this protein is Nascent polypeptide-associated complex subunit alpha (Naca).